The following is a 162-amino-acid chain: Nucleotide-binding protein A2cp1_0112 (162 aa).

Belongs to the YajQ family.

Its function is as follows. Nucleotide-binding protein. The chain is Nucleotide-binding protein A2cp1_0112 from Anaeromyxobacter dehalogenans (strain 2CP-1 / ATCC BAA-258).